A 455-amino-acid chain; its full sequence is 2-succinylbenzoate--CoA ligase (455 aa).

The protein belongs to the ATP-dependent AMP-binding enzyme family. MenE subfamily.

It catalyses the reaction 2-succinylbenzoate + ATP + CoA = 2-succinylbenzoyl-CoA + AMP + diphosphate. It functions in the pathway quinol/quinone metabolism; 1,4-dihydroxy-2-naphthoate biosynthesis; 1,4-dihydroxy-2-naphthoate from chorismate: step 5/7. Its pathway is quinol/quinone metabolism; menaquinone biosynthesis. Functionally, converts 2-succinylbenzoate (OSB) to 2-succinylbenzoyl-CoA (OSB-CoA). This chain is 2-succinylbenzoate--CoA ligase, found in Salmonella typhimurium (strain LT2 / SGSC1412 / ATCC 700720).